A 128-amino-acid chain; its full sequence is Transmembrane protein 234 homolog (128 aa).

4 consecutive transmembrane segments (helical) span residues 3 to 23 (TYNI…NPLI), 53 to 73 (PSYT…FYTL), 80 to 100 (LVVP…GMLL), and 104 to 124 (VLHF…TICV).

This sequence belongs to the TMEM234 family.

The protein localises to the membrane. This Dictyostelium discoideum (Social amoeba) protein is Transmembrane protein 234 homolog.